Here is a 1004-residue protein sequence, read N- to C-terminus: Ephrin type-B receptor 2 (1004 aa).

An N-terminal signal peptide occupies residues 1–19 (MGPLWFCCLPLALLPLLAA). At 20–544 (VEETLMDSTT…QTSVQEKLPL (525 aa)) the chain is on the extracellular side. In terms of domain architecture, Eph LBD spans 21 to 203 (EETLMDSTTA…FYRKCPRVIQ (183 aa)). 2 disulfides stabilise this stretch: Cys-63/Cys-185 and Cys-98/Cys-108. 5 N-linked (GlcNAc...) asparagine glycosylation sites follow: Asn-266, Asn-337, Asn-429, Asn-478, and Asn-483. 2 consecutive Fibronectin type-III domains span residues 325–435 (IPSA…TNQA) and 436–531 (APSA…TMTE). Residues 545–565 (IIGSSAAGLVFLIAVVVIIIV) traverse the membrane as a helical segment. The Cytoplasmic portion of the chain corresponds to 566 to 1004 (CNRRRGFERA…QMNQIQSVEV (439 aa)). The 264-residue stretch at 639–902 (VKIEQVIGAG…QIVNTLDKMI (264 aa)) folds into the Protein kinase domain. ATP is bound by residues 645–653 (IGAGEFGEV) and Lys-671. Asp-764 functions as the Proton acceptor in the catalytic mechanism. Positions 931 to 995 (TSFNTVDEWL…LNSIQVMRAQ (65 aa)) constitute an SAM domain. A PDZ-binding motif is present at residues 1002–1004 (VEV).

This sequence belongs to the protein kinase superfamily. Tyr protein kinase family. Ephrin receptor subfamily. Heterotetramer upon binding of the ligand. The heterotetramer is composed of an ephrin dimer and a receptor dimer. Oligomerization is probably required to induce biological responses. Post-translationally, ligand binding induces cleavage by matrix metalloproteinases (MMPs) such as MMP7/MMP9, producing an EphB2/N-terminal fragment (NTF) and a C-terminal long fragment (EphB2-LF). EphB2-LF is further cleaved by MMPs, producing EphB2/CTF1 which is further cleaved by the PS1/gamma-secretase producing EphB2/CTF2. As to expression, wide tissue distribution throughout development and sustained expression in adult brain. The longer form (CEK5+) is specifically expressed in the central nervous system.

It localises to the cell membrane. The protein resides in the cell projection. The protein localises to the axon. It is found in the dendrite. It carries out the reaction L-tyrosyl-[protein] + ATP = O-phospho-L-tyrosyl-[protein] + ADP + H(+). Its function is as follows. Receptor tyrosine kinase which binds promiscuously transmembrane ephrin-B family ligands residing on adjacent cells, leading to contact-dependent bidirectional signaling into neighboring cells. The signaling pathway downstream of the receptor is referred to as forward signaling while the signaling pathway downstream of the ephrin ligand is referred to as reverse signaling. Functions in axon guidance during development. In addition to axon guidance, also regulates dendritic spines development and maturation and stimulates the formation of excitatory synapses. This chain is Ephrin type-B receptor 2 (EPHB2), found in Gallus gallus (Chicken).